Here is a 124-residue protein sequence, read N- to C-terminus: Ragulator complex protein LAMTOR3 (124 aa).

The required for interaction with LAMTOR2 stretch occupies residues 57–70 (TDQGSKLGLSKNKS).

It belongs to the LAMTOR3 family. Part of the Ragulator complex composed of LAMTOR1, LAMTOR2, LAMTOR3, LAMTOR4 and LAMTOR5. LAMTOR4 and LAMTOR5 form a heterodimer that interacts, through LAMTOR1, with a LAMTOR2, LAMTOR3 heterodimer. The Ragulator complex interacts with both the mTORC1 complex and heterodimers constituted of the Rag GTPases RagA/RRAGA, RagB/RRAGB, RagC/RRAGC and RagD/RRAGD; regulated by amino acid availability. The Ragulator complex interacts with SLC38A9; the probable amino acid sensor. Interacts with LAMTOR1 and LAMTOR2; the interaction is direct. Component of the lysosomal folliculin complex (LFC), composed of FLCN, FNIP1 (or FNIP2), RagA/RRAGA or RagB/RRAGB GDP-bound, RagC/RRAGC or RagD/RRAGD GTP-bound, and Ragulator. Interacts with MAP2K1/MEK1 and MAPK2. Interacts with MORG1.

It is found in the late endosome membrane. In terms of biological role, as part of the Ragulator complex it is involved in amino acid sensing and activation of mTORC1, a signaling complex promoting cell growth in response to growth factors, energy levels, and amino acids. Activated by amino acids through a mechanism involving the lysosomal V-ATPase, the Ragulator plays a dual role for the small GTPases Rag (RagA/RRAGA, RagB/RRAGB, RagC/RRAGC and/or RagD/RRAGD): it (1) acts as a guanine nucleotide exchange factor (GEF), activating the small GTPases Rag and (2) mediates recruitment of Rag GTPases to the lysosome membrane. Activated Ragulator and Rag GTPases function as a scaffold recruiting mTORC1 to lysosomes where it is in turn activated. Adapter protein that enhances the efficiency of the MAP kinase cascade facilitating the activation of MAPK2. This is Ragulator complex protein LAMTOR3 (Lamtor3) from Mus musculus (Mouse).